The primary structure comprises 505 residues: 2,3-bisphosphoglycerate-independent phosphoglycerate mutase (505 aa).

Aspartate 11 and serine 61 together coordinate Mn(2+). Catalysis depends on serine 61, which acts as the Phosphoserine intermediate. Substrate is bound by residues histidine 122, 152–153, arginine 183, arginine 189, 259–262, and lysine 332; these read RD and RTDR. Residues aspartate 399, histidine 403, aspartate 440, histidine 441, and histidine 458 each contribute to the Mn(2+) site.

The protein belongs to the BPG-independent phosphoglycerate mutase family. Monomer. Mn(2+) is required as a cofactor.

The enzyme catalyses (2R)-2-phosphoglycerate = (2R)-3-phosphoglycerate. It participates in carbohydrate degradation; glycolysis; pyruvate from D-glyceraldehyde 3-phosphate: step 3/5. Catalyzes the interconversion of 2-phosphoglycerate and 3-phosphoglycerate. The protein is 2,3-bisphosphoglycerate-independent phosphoglycerate mutase of Flavobacterium psychrophilum (strain ATCC 49511 / DSM 21280 / CIP 103535 / JIP02/86).